The primary structure comprises 468 residues: uncharacterized protein (468 aa).

Positions 3 to 61 (TFANGMTLDVTVDALAPGGKAVCRHEGRVIFVDRGLPGQQLHVRLTTVRKRFAEAECLA) constitute a TRAM domain. [4Fe-4S] cluster contacts are provided by cysteine 74, cysteine 80, cysteine 83, and cysteine 162. Glutamine 288, tyrosine 317, glutamate 338, and aspartate 389 together coordinate S-adenosyl-L-methionine. Cysteine 416 functions as the Nucleophile in the catalytic mechanism.

The protein belongs to the class I-like SAM-binding methyltransferase superfamily. RNA M5U methyltransferase family.

This is an uncharacterized protein from Nitratidesulfovibrio vulgaris (strain ATCC 29579 / DSM 644 / CCUG 34227 / NCIMB 8303 / VKM B-1760 / Hildenborough) (Desulfovibrio vulgaris).